The following is an 883-amino-acid chain: Protein SEY1 homolog (883 aa).

The Cytoplasmic segment spans residues 1 to 795 (MQMDRKTQII…ETGGKMSLKN (795 aa)). The 247-residue stretch at 33–279 (GFNYNVVAIL…IPSDGFAHYC (247 aa)) folds into the GB1/RHD3-type G domain. 43-50 (GSQSSGKS) serves as a coordination point for GTP. A coiled-coil region spans residues 673–693 (LDEIMDVLKSKLDEISDNLSS). A helical membrane pass occupies residues 796–816 (VPLFFWVILLILGWNELLFFI). At 817–819 (RFF) the chain is on the lumenal side. Residues 820 to 840 (FRLNIILPLFLAAAVILSTLF) form a helical membrane-spanning segment. The Cytoplasmic segment spans residues 841 to 883 (FNGNMEVLSTINKVVFFLAKSSFGFYRQLQTMGEKVAQVPTAD).

This sequence belongs to the TRAFAC class dynamin-like GTPase superfamily. GB1/RHD3 GTPase family. RHD3 subfamily.

The protein resides in the endoplasmic reticulum membrane. In terms of biological role, probable GTP-binding protein involved in generating and maintaining the structure of the tubular endoplasmic reticulum network. This chain is Protein SEY1 homolog, found in Plasmodium knowlesi (strain H).